A 418-amino-acid polypeptide reads, in one-letter code: rRNA methyltransferase 3, mitochondrial (418 aa).

A mitochondrion-targeting transit peptide spans 1-40 (MAAPAKGMWCSLGSLLRVVQTRDLNARRWVRALRRSPVRV). Positions 41-90 (LSPSGQVEERKRAPDQQPRKAVPKASSQGQRQKQPLETSPSQTPHTWEEA) are disordered. Residues 47-58 (VEERKRAPDQQP) show a composition bias toward basic and acidic residues. Positions 65–85 (ASSQGQRQKQPLETSPSQTPH) are enriched in polar residues. S-adenosyl-L-methionine contacts are provided by G354, I378, and L387.

It belongs to the class IV-like SAM-binding methyltransferase superfamily. RNA methyltransferase TrmH family.

The protein localises to the mitochondrion. The catalysed reaction is guanosine(1370) in 16S rRNA + S-adenosyl-L-methionine = 2'-O-methylguanosine(1370) in 16S rRNA + S-adenosyl-L-homocysteine + H(+). In terms of biological role, S-adenosyl-L-methionine-dependent 2'-O-ribose methyltransferase that catalyzes the formation of 2'-O-methylguanosine at position 1370 (Gm1370) in the 16S mitochondrial large subunit ribosomal RNA (mtLSU rRNA), a conserved modification in the peptidyl transferase domain of the mtLSU rRNA. Also required for formation of 2'-O-methyluridine at position 1369 (Um1369) mediated by MRM2. In Mus musculus (Mouse), this protein is rRNA methyltransferase 3, mitochondrial.